Reading from the N-terminus, the 341-residue chain is Transcription factor ETV7 (341 aa).

The region spanning 33 to 117 (NLLGEGGICK…ELLQYIKTQR (85 aa)) is the PNT domain. Positions 224-305 (RLLWDYVYQL…PGQKLLFRFL (82 aa)) form a DNA-binding region, ETS. The tract at residues 315 to 341 (KHSHLEPLESQEQDRIEFKDKRPEISP) is disordered.

It belongs to the ETS family. Expressed in hematopoietic tissues.

Its subcellular location is the nucleus. Its function is as follows. Transcriptional repressor; binds to the DNA sequence 5'-CCGGAAGT-3'. Isoform A does not seem to have a repressor activity. Isoform C does not seem to have a repressor activity. In Homo sapiens (Human), this protein is Transcription factor ETV7 (ETV7).